Here is a 220-residue protein sequence, read N- to C-terminus: Probable chemoreceptor glutamine deamidase CheD 2 (220 aa).

It belongs to the CheD family.

It carries out the reaction L-glutaminyl-[protein] + H2O = L-glutamyl-[protein] + NH4(+). Its function is as follows. Probably deamidates glutamine residues to glutamate on methyl-accepting chemotaxis receptors (MCPs), playing an important role in chemotaxis. In Methanosarcina acetivorans (strain ATCC 35395 / DSM 2834 / JCM 12185 / C2A), this protein is Probable chemoreceptor glutamine deamidase CheD 2.